A 371-amino-acid chain; its full sequence is GDP-mannose transporter (371 aa).

Residues methionine 1–arginine 51 are Cytoplasmic-facing. The helical transmembrane segment at isoleucine 52–valine 72 threads the bilayer. Residues threonine 73–glycine 80 are Lumenal-facing. Residues phenylalanine 81–isoleucine 101 traverse the membrane as a helical segment. Over glycine 102–lysine 121 the chain is Cytoplasmic. The helical transmembrane segment at lysine 122–serine 138 threads the bilayer. At lysine 139 to serine 145 the chain is on the lumenal side. The chain crosses the membrane as a helical span at residues isoleucine 146–tyrosine 162. The Cytoplasmic segment spans residues glycine 163–lysine 171. The chain crosses the membrane as a helical span at residues valine 172–tyrosine 192. Over glycine 193–alanine 206 the chain is Lumenal. Residues leucine 207–isoleucine 227 traverse the membrane as a helical segment. The Cytoplasmic portion of the chain corresponds to methionine 228 to aspartate 241. Residues threonine 242 to glutamate 262 form a helical membrane-spanning segment. Topologically, residues aspartate 263–threonine 281 are lumenal. N-linked (GlcNAc...) asparagine glycosylation occurs at asparagine 268. The chain crosses the membrane as a helical span at residues isoleucine 282 to cysteine 302. Residues valine 303–threonine 309 are Cytoplasmic-facing. Residues threonine 310–phenylalanine 329 traverse the membrane as a helical segment. The Lumenal segment spans residues phenylalanine 330–alanine 332. The chain crosses the membrane as a helical span at residues alanine 333–alanine 355. Residues lysine 356–lysine 371 lie on the Cytoplasmic side of the membrane.

The protein belongs to the TPT transporter family. SLC35D subfamily. Homooligomer.

Its subcellular location is the golgi apparatus membrane. It is found in the cytoplasmic vesicle membrane. The protein resides in the endoplasmic reticulum membrane. In terms of biological role, involved in the import of GDP-mannose from the cytoplasm into the Golgi lumen. Involved in hyphal formation. This chain is GDP-mannose transporter (VRG4), found in Candida albicans (strain SC5314 / ATCC MYA-2876) (Yeast).